A 157-amino-acid polypeptide reads, in one-letter code: Small ribosomal subunit protein uS7 (157 aa).

This sequence belongs to the universal ribosomal protein uS7 family. In terms of assembly, part of the 30S ribosomal subunit. Contacts proteins S9 and S11.

Its function is as follows. One of the primary rRNA binding proteins, it binds directly to 16S rRNA where it nucleates assembly of the head domain of the 30S subunit. Is located at the subunit interface close to the decoding center, probably blocks exit of the E-site tRNA. The chain is Small ribosomal subunit protein uS7 from Borreliella afzelii (strain PKo) (Borrelia afzelii).